Reading from the N-terminus, the 223-residue chain is Deoxyribose-phosphate aldolase (223 aa).

The active-site Proton donor/acceptor is the Asp89. The active-site Schiff-base intermediate with acetaldehyde is the Lys152. Lys181 (proton donor/acceptor) is an active-site residue.

Belongs to the DeoC/FbaB aldolase family. DeoC type 1 subfamily.

The protein localises to the cytoplasm. It carries out the reaction 2-deoxy-D-ribose 5-phosphate = D-glyceraldehyde 3-phosphate + acetaldehyde. Its pathway is carbohydrate degradation; 2-deoxy-D-ribose 1-phosphate degradation; D-glyceraldehyde 3-phosphate and acetaldehyde from 2-deoxy-alpha-D-ribose 1-phosphate: step 2/2. Functionally, catalyzes a reversible aldol reaction between acetaldehyde and D-glyceraldehyde 3-phosphate to generate 2-deoxy-D-ribose 5-phosphate. The polypeptide is Deoxyribose-phosphate aldolase (Bacillus mycoides (strain KBAB4) (Bacillus weihenstephanensis)).